The following is a 274-amino-acid chain: NAD(P)H-quinone oxidoreductase subunit K, chloroplastic (274 aa).

Polar residues-rich tracts occupy residues 1 to 10 (MVINQKNLSS) and 18 to 27 (SGSQSSTKAD). Residues 1 to 27 (MVINQKNLSSPVAPYDKSGSQSSTKAD) form a disordered region. [4Fe-4S] cluster-binding residues include Cys-90, Cys-91, Cys-155, and Cys-186.

It belongs to the complex I 20 kDa subunit family. NDH is composed of at least 16 different subunits, 5 of which are encoded in the nucleus. [4Fe-4S] cluster serves as cofactor.

It is found in the plastid. Its subcellular location is the chloroplast thylakoid membrane. It carries out the reaction a plastoquinone + NADH + (n+1) H(+)(in) = a plastoquinol + NAD(+) + n H(+)(out). The catalysed reaction is a plastoquinone + NADPH + (n+1) H(+)(in) = a plastoquinol + NADP(+) + n H(+)(out). Its function is as follows. NDH shuttles electrons from NAD(P)H:plastoquinone, via FMN and iron-sulfur (Fe-S) centers, to quinones in the photosynthetic chain and possibly in a chloroplast respiratory chain. The immediate electron acceptor for the enzyme in this species is believed to be plastoquinone. Couples the redox reaction to proton translocation, and thus conserves the redox energy in a proton gradient. This is NAD(P)H-quinone oxidoreductase subunit K, chloroplastic from Chlorokybus atmophyticus (Soil alga).